The chain runs to 858 residues: Chitin synthase 2 (858 aa).

Over residues 1–12 the composition is skewed to basic and acidic residues; sequence MYPEGPKPEHDQ. Residues 1–116 are disordered; that stretch reads MYPEGPKPEH…GQAPRRQPRR (116 aa). The segment covering 15 to 24 has biased composition (polar residues); that stretch reads LQDTQFSNQP. Composition is skewed to pro residues over residues 52-68 and 76-89; these read AYPPTQYPTSPPPPNFP and PYPPFNNNPSPVSP. 7 helical membrane passes run 500–517, 540–560, 586–606, 621–641, 665–685, 799–819, and 825–845; these read RWLNGSFFAGVYALYHWR, TYNLIFSWFALGNFYLTFFIL, LHTVFNYIYIVLIVIQFIMAL, MVFFAILMVYMMFAAIWITVV, NIIISLCATYVMYFVSSFMFL, VLAWIISNLALVVAIANTTVI, and ASIYLGFILWSVAGLSVIRFT.

The protein belongs to the chitin synthase family.

Its subcellular location is the cell membrane. The catalysed reaction is [(1-&gt;4)-N-acetyl-beta-D-glucosaminyl](n) + UDP-N-acetyl-alpha-D-glucosamine = [(1-&gt;4)-N-acetyl-beta-D-glucosaminyl](n+1) + UDP + H(+). Polymerizes chitin, a structural polymer of the cell wall and septum, by transferring the sugar moiety of UDP-GlcNAc to the non-reducing end of the growing chitin polymer. This is Chitin synthase 2 (CHS2) from Rhizopus oligosporus (Rhizopus microsporus var. oligosporus).